The sequence spans 61 residues: Truncated Cytokine response-modifying protein B (61 aa).

The protein is truncated in this strain and presumably inactive. It has similarities with variola virus CrmB, but the product is inactivated due to several premature stop codon. This Bos taurus (Bovine) protein is Truncated Cytokine response-modifying protein B.